Consider the following 213-residue polypeptide: Putative thymidylate kinase 251L (213 aa).

21 to 28 (GCDKTGKS) contacts ATP.

This sequence belongs to the thymidylate kinase family.

The enzyme catalyses dTMP + ATP = dTDP + ADP. The protein operates within pyrimidine metabolism; dTTP biosynthesis. Catalyzes the conversion of dTMP to dTDP. The chain is Putative thymidylate kinase 251L from Acheta domesticus (House cricket).